The sequence spans 195 residues: tRNA (pseudouridine(54)-N(1))-methyltransferase (195 aa).

Position 129 (Leu129) interacts with S-adenosyl-L-methionine.

Belongs to the methyltransferase superfamily. TrmY family. As to quaternary structure, homodimer.

It localises to the cytoplasm. The enzyme catalyses pseudouridine(54) in tRNA + S-adenosyl-L-methionine = N(1)-methylpseudouridine(54) in tRNA + S-adenosyl-L-homocysteine + H(+). Specifically catalyzes the N1-methylation of pseudouridine at position 54 (Psi54) in tRNAs. The protein is tRNA (pseudouridine(54)-N(1))-methyltransferase of Methanocorpusculum labreanum (strain ATCC 43576 / DSM 4855 / Z).